The chain runs to 188 residues: Xanthine phosphoribosyltransferase (188 aa).

Xanthine is bound by residues leucine 20 and asparagine 27. A 5-phospho-alpha-D-ribose 1-diphosphate-binding site is contributed by 127-131; it reads AHGEA. Lysine 155 contacts xanthine.

Belongs to the purine/pyrimidine phosphoribosyltransferase family. Xpt subfamily. As to quaternary structure, homodimer.

It localises to the cytoplasm. It carries out the reaction XMP + diphosphate = xanthine + 5-phospho-alpha-D-ribose 1-diphosphate. The protein operates within purine metabolism; XMP biosynthesis via salvage pathway; XMP from xanthine: step 1/1. In terms of biological role, converts the preformed base xanthine, a product of nucleic acid breakdown, to xanthosine 5'-monophosphate (XMP), so it can be reused for RNA or DNA synthesis. This chain is Xanthine phosphoribosyltransferase, found in Heliobacterium modesticaldum (strain ATCC 51547 / Ice1).